The following is a 251-amino-acid chain: Probable aquaporin TIP4-1 (251 aa).

2 helical membrane passes run 26–46 (LVLT…AGVP) and 57–77 (ALAG…TAGF). Residues 85-87 (NPA) carry the NPA 1 motif. The next 3 membrane-spanning stretches (helical) occupy residues 104 to 124 (ALYV…LRYL), 144 to 164 (GLVM…ATIL), and 170 to 190 (VPGF…IAGG). Positions 198–200 (NPA) match the NPA 2 motif. Residues 219-239 (WLGPLIGGPLAGLVYESLFLV) form a helical membrane-spanning segment.

The protein belongs to the MIP/aquaporin (TC 1.A.8) family. TIP (TC 1.A.8.10) subfamily. In terms of tissue distribution, expressed in roots, leaves and anthers.

It localises to the vacuole membrane. Functionally, aquaporins facilitate the transport of water and small neutral solutes across cell membranes. May be involved in transport from the vacuolar compartment to the cytoplasm. In Oryza sativa subsp. japonica (Rice), this protein is Probable aquaporin TIP4-1 (TIP4-1).